Here is a 272-residue protein sequence, read N- to C-terminus: Interleukin-2 receptor subunit alpha (272 aa).

Positions 1 to 21 (MDPYLLMWGLLTFITVPGCQA) are cleaved as a signal peptide. Positions 22-84 (ELCDDDPPKI…SWDNQCQCTS (63 aa)) constitute a Sushi 1 domain. Over 22–240 (ELCDDDPPKI…ETFIFTTEYQ (219 aa)) the chain is Extracellular. 3 disulfides stabilise this stretch: C24–C67, C49–C80, and C51–C82. N70 and N89 each carry an N-linked (GlcNAc...) asparagine glycan. The segment covering 87–98 (ARNTTKQVTPQP) has biased composition (polar residues). Residues 87 to 109 (ARNTTKQVTPQPEEQKERKTTEM) form a disordered region. The Sushi 2 domain maps to 123-186 (GHCREPPPWE…WTQPQLICTG (64 aa)). 2 disulfides stabilise this stretch: C125-C168 and C152-C184. The interval 186–213 (GETEPSQFPGEEEPQASPDGLPESETSR) is disordered. A helical transmembrane segment spans residues 241-259 (VAVAGCVFLLISVLLLSGL). Over 260 to 272 (TWQRRQRKNRRTI) the chain is Cytoplasmic.

In terms of assembly, non-covalent dimer of an alpha and a beta subunit. IL2R exists in 3 different forms: a high affinity dimer, an intermediate affinity monomer (beta subunit), and a low affinity monomer (alpha subunit). The high and intermediate affinity forms also associate with a gamma subunit.

It is found in the membrane. Functionally, receptor for interleukin-2. The receptor is involved in the regulation of immune tolerance by controlling regulatory T cells (TREGs) activity. TREGs suppress the activation and expansion of autoreactive T-cells. In Macaca mulatta (Rhesus macaque), this protein is Interleukin-2 receptor subunit alpha (IL2RA).